A 287-amino-acid polypeptide reads, in one-letter code: Formamidopyrimidine-DNA glycosylase (287 aa).

Pro2 (schiff-base intermediate with DNA) is an active-site residue. Glu3 serves as the catalytic Proton donor. Residue Lys61 is the Proton donor; for beta-elimination activity of the active site. DNA is bound by residues His95, Arg115, and Arg157. Residues 243-277 (NVYGRADQPCRRCGEPVRREAFMNRSSFSCPRCQP) form an FPG-type zinc finger. The Proton donor; for delta-elimination activity role is filled by Arg267.

The protein belongs to the FPG family. Monomer. The cofactor is Zn(2+).

The enzyme catalyses Hydrolysis of DNA containing ring-opened 7-methylguanine residues, releasing 2,6-diamino-4-hydroxy-5-(N-methyl)formamidopyrimidine.. It carries out the reaction 2'-deoxyribonucleotide-(2'-deoxyribose 5'-phosphate)-2'-deoxyribonucleotide-DNA = a 3'-end 2'-deoxyribonucleotide-(2,3-dehydro-2,3-deoxyribose 5'-phosphate)-DNA + a 5'-end 5'-phospho-2'-deoxyribonucleoside-DNA + H(+). Its function is as follows. Involved in base excision repair of DNA damaged by oxidation or by mutagenic agents. Acts as a DNA glycosylase that recognizes and removes damaged bases. Has a preference for oxidized purines, such as 7,8-dihydro-8-oxoguanine (8-oxoG). Has AP (apurinic/apyrimidinic) lyase activity and introduces nicks in the DNA strand. Cleaves the DNA backbone by beta-delta elimination to generate a single-strand break at the site of the removed base with both 3'- and 5'-phosphates. The polypeptide is Formamidopyrimidine-DNA glycosylase (Salinispora tropica (strain ATCC BAA-916 / DSM 44818 / JCM 13857 / NBRC 105044 / CNB-440)).